Here is a 159-residue protein sequence, read N- to C-terminus: Ribosomal RNA large subunit methyltransferase H (159 aa).

S-adenosyl-L-methionine is bound by residues L76, G108, and 127-132; that span reads FSKMTF.

It belongs to the RNA methyltransferase RlmH family. In terms of assembly, homodimer.

It is found in the cytoplasm. The catalysed reaction is pseudouridine(1915) in 23S rRNA + S-adenosyl-L-methionine = N(3)-methylpseudouridine(1915) in 23S rRNA + S-adenosyl-L-homocysteine + H(+). Specifically methylates the pseudouridine at position 1915 (m3Psi1915) in 23S rRNA. The chain is Ribosomal RNA large subunit methyltransferase H from Geobacillus thermodenitrificans (strain NG80-2).